A 230-amino-acid polypeptide reads, in one-letter code: Uracil-DNA glycosylase (230 aa).

The Proton acceptor role is filled by D70.

Belongs to the uracil-DNA glycosylase (UDG) superfamily. UNG family.

It localises to the cytoplasm. It carries out the reaction Hydrolyzes single-stranded DNA or mismatched double-stranded DNA and polynucleotides, releasing free uracil.. Excises uracil residues from the DNA which can arise as a result of misincorporation of dUMP residues by DNA polymerase or due to deamination of cytosine. The polypeptide is Uracil-DNA glycosylase (Pseudomonas entomophila (strain L48)).